A 150-amino-acid chain; its full sequence is Urease accessory protein UreE (150 aa).

Belongs to the UreE family.

The protein resides in the cytoplasm. Its function is as follows. Involved in urease metallocenter assembly. Binds nickel. Probably functions as a nickel donor during metallocenter assembly. In Streptococcus salivarius (strain 57.I), this protein is Urease accessory protein UreE.